Here is a 195-residue protein sequence, read N- to C-terminus: CASP-like protein 2C2 (195 aa).

Over M1–R18 the chain is Cytoplasmic. The helical transmembrane segment at L19–A39 threads the bilayer. Residues E40 to Q57 are Extracellular-facing. A helical transmembrane segment spans residues A58–V78. Over R79–A106 the chain is Cytoplasmic. Residues Y107–V127 form a helical membrane-spanning segment. The Extracellular portion of the chain corresponds to E128–Q145. A helical membrane pass occupies residues A146 to F166. The Cytoplasmic portion of the chain corresponds to S167–H195.

It belongs to the Casparian strip membrane proteins (CASP) family. Homodimer and heterodimers.

It is found in the cell membrane. The chain is CASP-like protein 2C2 from Oryza sativa subsp. japonica (Rice).